A 523-amino-acid chain; its full sequence is Bifunctional purine biosynthesis protein PurH (523 aa).

The MGS-like domain occupies 1 to 154; that stretch reads MTATAGSNKR…KNHPSVAVVT (154 aa).

Belongs to the PurH family.

It catalyses the reaction (6R)-10-formyltetrahydrofolate + 5-amino-1-(5-phospho-beta-D-ribosyl)imidazole-4-carboxamide = 5-formamido-1-(5-phospho-D-ribosyl)imidazole-4-carboxamide + (6S)-5,6,7,8-tetrahydrofolate. The catalysed reaction is IMP + H2O = 5-formamido-1-(5-phospho-D-ribosyl)imidazole-4-carboxamide. The protein operates within purine metabolism; IMP biosynthesis via de novo pathway; 5-formamido-1-(5-phospho-D-ribosyl)imidazole-4-carboxamide from 5-amino-1-(5-phospho-D-ribosyl)imidazole-4-carboxamide (10-formyl THF route): step 1/1. Its pathway is purine metabolism; IMP biosynthesis via de novo pathway; IMP from 5-formamido-1-(5-phospho-D-ribosyl)imidazole-4-carboxamide: step 1/1. The polypeptide is Bifunctional purine biosynthesis protein PurH (Streptomyces coelicolor (strain ATCC BAA-471 / A3(2) / M145)).